We begin with the raw amino-acid sequence, 515 residues long: Calcium-dependent protein kinase 2 (515 aa).

The disordered stretch occupies residues 1 to 51 (MGNCCPGSGDAEPASSDASTGNGSSSFKAGASPSSAPAQNKPPAPIGPVLG). Residue glycine 2 is the site of N-myristoyl glycine attachment. Positions 14–38 (ASSDASTGNGSSSFKAGASPSSAPA) are enriched in low complexity. Residues 61 to 319 (YTIGKELGRG…AYEVLNHPWI (259 aa)) enclose the Protein kinase domain. ATP-binding positions include 67–75 (LGRGQFGVT) and lysine 90. Catalysis depends on aspartate 185, which acts as the Proton acceptor. The tract at residues 325–355 (APDTPLDNAVMNRLKQFRAMNQFKKAALRVI) is autoinhibitory domain. EF-hand domains follow at residues 362–397 (EEIR…QGTK), 398–433 (LTEA…MNRM), 434–469 (DREE…KGLL), and 473–504 (DIKD…GNPE). The Ca(2+) site is built by aspartate 375, aspartate 377, serine 379, threonine 381, glutamate 386, aspartate 411, aspartate 413, asparagine 415, threonine 417, glutamate 422, aspartate 447, aspartate 449, serine 451, cysteine 453, glutamate 458, aspartate 482, aspartate 484, aspartate 486, arginine 488, and glutamate 493.

It belongs to the protein kinase superfamily. Ser/Thr protein kinase family. CDPK subfamily. As to expression, expressed in heading panicles, spikelets and mature pollen grains.

It is found in the membrane. It catalyses the reaction L-seryl-[protein] + ATP = O-phospho-L-seryl-[protein] + ADP + H(+). The catalysed reaction is L-threonyl-[protein] + ATP = O-phospho-L-threonyl-[protein] + ADP + H(+). Its activity is regulated as follows. Activated by calcium. Autophosphorylation may play an important role in the regulation of the kinase activity. Its function is as follows. May play a role in signal transduction pathways that involve calcium as a second messenger. This is Calcium-dependent protein kinase 2 from Oryza sativa subsp. japonica (Rice).